Reading from the N-terminus, the 303-residue chain is Cilia- and flagella-associated protein 161 (303 aa).

As to quaternary structure, microtubule inner protein component of sperm flagellar doublet microtubules.

The protein resides in the cytoplasm. The protein localises to the cytoskeleton. It localises to the cilium axoneme. Its subcellular location is the flagellum axoneme. Its function is as follows. Microtubule inner protein (MIP) part of the dynein-decorated doublet microtubules (DMTs) in cilia axoneme, which is required for motile cilia beating. This is Cilia- and flagella-associated protein 161 from Mus musculus (Mouse).